A 766-amino-acid chain; its full sequence is Dipeptidyl peptidase 4 (766 aa).

Over 1 to 6 (MKTPWK) the chain is Cytoplasmic. Residues 7-27 (VLLGLLGIAALVTVITVPVVL) traverse the membrane as a helical; Signal-anchor for type II membrane protein segment. Over 28–766 (LNKGTDDAAA…HFLKQCFSLP (739 aa)) the chain is Extracellular. N85, N92, N150, N179, N219, N229, N279, and N321 each carry an N-linked (GlcNAc...) asparagine glycan. Disulfide bonds link C385/C394, C444/C447, and C454/C472. The active-site Charge relay system is S630. C649 and C762 are oxidised to a cystine. The N-linked (GlcNAc...) asparagine glycan is linked to N685. Active-site charge relay system residues include D708 and H740.

This sequence belongs to the peptidase S9B family. DPPIV subfamily. Monomer. Homodimer. Heterodimer with Seprase (FAP). Requires homodimerization for optimal dipeptidyl peptidase activity and T-cell costimulation. Found in a membrane raft complex, at least composed of BCL10, CARD11, DPP4 and IKBKB. Associates with collagen. Interacts with PTPRC; the interaction is enhanced in an interleukin-12-dependent manner in activated lymphocytes. Interacts (via extracellular domain) with ADA; does not inhibit its dipeptidyl peptidase activity. Interacts with CAV1 (via the N-terminus); the interaction is direct. Interacts (via cytoplasmic tail) with CARD11 (via PDZ domain); its homodimerization is necessary for interaction with CARD11. Interacts with IGF2R; the interaction is direct. Interacts with GPC3. The soluble form (Dipeptidyl peptidase 4 soluble form also named SDPP) derives from the membrane form (Dipeptidyl peptidase 4 membrane form also named MDPP) by proteolytic processing. Post-translationally, N- and O-Glycosylated. In terms of processing, phosphorylated. Mannose 6-phosphate residues in the carbohydrate moiety are necessary for interaction with IGF2R in activated T-cells. Mannose 6-phosphorylation is induced during T-cell activation.

Its subcellular location is the secreted. The protein localises to the cell membrane. It is found in the apical cell membrane. It localises to the cell projection. The protein resides in the invadopodium membrane. Its subcellular location is the lamellipodium membrane. The protein localises to the cell junction. It is found in the membrane raft. It catalyses the reaction Release of an N-terminal dipeptide, Xaa-Yaa-|-Zaa-, from a polypeptide, preferentially when Yaa is Pro, provided Zaa is neither Pro nor hydroxyproline.. Its activity is regulated as follows. Inhibited by GPC3 and diprotin A. Cell surface glycoprotein receptor involved in the costimulatory signal essential for T-cell receptor (TCR)-mediated T-cell activation. Acts as a positive regulator of T-cell coactivation, by binding at least ADA, CAV1, IGF2R, and PTPRC. Its binding to CAV1 and CARD11 induces T-cell proliferation and NF-kappa-B activation in a T-cell receptor/CD3-dependent manner. Its interaction with ADA also regulates lymphocyte-epithelial cell adhesion. In association with FAP is involved in the pericellular proteolysis of the extracellular matrix (ECM), the migration and invasion of endothelial cells into the ECM. May be involved in the promotion of lymphatic endothelial cells adhesion, migration and tube formation. When overexpressed, enhanced cell proliferation, a process inhibited by GPC3. Also acts as a serine exopeptidase with a dipeptidyl peptidase activity that regulates various physiological processes by cleaving peptides in the circulation, including many chemokines, mitogenic growth factors, neuropeptides and peptide hormones such as brain natriuretic peptide 32. Removes N-terminal dipeptides sequentially from polypeptides having unsubstituted N-termini provided that the penultimate residue is proline. This Sus scrofa (Pig) protein is Dipeptidyl peptidase 4 (DPP4).